The chain runs to 188 residues: PRA1 family protein 3 (188 aa).

At Met1 the chain carries N-acetylmethionine. The Cytoplasmic segment spans residues 1-35 (MDVNLAPLRAWDDFFPGSDRFARPDFRDISKWNNR). The next 2 helical transmembrane spans lie at 36 to 56 (VVSN…MMIS) and 57 to 77 (VVGF…VLVF). Residues 78-92 (TGFVWAAHNKDILRR) are Cytoplasmic-facing. The next 2 helical transmembrane spans lie at 93–113 (MKKQ…YFLI) and 115–135 (MFGG…LMFI). A required for homodimer formation and heterodimer formation with ARL6IP1 region spans residues 103–117 (MVVMLASYFLISMFG). At 136-188 (HASLRLRNLKNKLENKMEGIGLKKTPMGIILDALEQQEDSINKFADYISKARE) the chain is on the cytoplasmic side. Residues 136-188 (HASLRLRNLKNKLENKMEGIGLKKTPMGIILDALEQQEDSINKFADYISKARE) form a targeting to endoplasmic reticulum membrane region.

This sequence belongs to the PRA1 family. Homodimer. Heterodimer with ARL6IP1. Forms multimers. Interacts with ARL6. Interacts with prenylated RAB1A and RAB3A. Interacts with SLC1A1/EAAC1. Interacts with RTN2 (via first transmembrane domain). Does not interact with VAMP1, VAMP2 or VAMP3. In terms of tissue distribution, ubiquitous. Most abundant in heart and brain. In the embryonic brain cortex, expressed in neurons and astrocytes.

The protein resides in the endoplasmic reticulum membrane. The protein localises to the cell membrane. It is found in the cytoplasm. It localises to the cytoskeleton. Functionally, regulates intracellular concentrations of taurine and glutamate. Negatively modulates SLC1A1/EAAC1 glutamate transport activity by decreasing its affinity for glutamate in a PKC activity-dependent manner. Plays a role in the retention of SLC1A1/EAAC1 in the endoplasmic reticulum. This Rattus norvegicus (Rat) protein is PRA1 family protein 3 (Arl6ip5).